We begin with the raw amino-acid sequence, 124 residues long: Large ribosomal subunit protein uL18 (124 aa).

It belongs to the universal ribosomal protein uL18 family. As to quaternary structure, part of the 50S ribosomal subunit; part of the 5S rRNA/L5/L18/L25 subcomplex. Contacts the 5S and 23S rRNAs.

Functionally, this is one of the proteins that bind and probably mediate the attachment of the 5S RNA into the large ribosomal subunit, where it forms part of the central protuberance. The chain is Large ribosomal subunit protein uL18 from Orientia tsutsugamushi (strain Ikeda) (Rickettsia tsutsugamushi).